We begin with the raw amino-acid sequence, 539 residues long: Acid-sensing ion channel 4 (539 aa).

At 1–68 the chain is on the cytoplasmic side; it reads MPIEIVCKIK…GPGPHGLRRT (68 aa). Residues 69 to 89 traverse the membrane as a helical segment; it reads LWVLALLTSLAAFLYQAASLA. The Extracellular portion of the chain corresponds to 90–438; the sequence is RGYLTRPHLV…EQRAAYGLSA (349 aa). Intrachain disulfides connect Cys118/Cys202 and Cys180/Cys187. N-linked (GlcNAc...) asparagine glycosylation is found at Asn191, Asn243, Asn341, and Asn376. Disulfide bonds link Cys296–Cys375, Cys318–Cys371, Cys322–Cys369, Cys331–Cys353, and Cys333–Cys345. A helical transmembrane segment spans residues 439 to 459; sequence LLGDLGGQMGLFIGASILTLL. Residues 452–454 carry the GAS motif; ion selectivity filter motif; it reads GAS. Residues 460–539 lie on the Cytoplasmic side of the membrane; that stretch reads EILDYIYEVS…PGSLFEDFAC (80 aa). Residues 501 to 531 form a disordered region; sequence EQSPCPNRGRAEGGGASNLLPNHHHPHGPPG.

This sequence belongs to the amiloride-sensitive sodium channel (TC 1.A.6) family. ASIC4 subfamily. Homotrimer. Heterotrimer; with other ASIC proteins producing functional channels. As to expression, expressed in brain, spinal cord and dorsal root ganglion (DRG). Expressed by a subset of sensory neurons in the DRG. Expressed by granule cells in the cerebellar cortex. In hippocampus, expression is detected in dentate gyrus granule cells, in pyramidal cells of CA1-CA3 subfields and in interneurons of the striatum oriens and radiatum of all subfields. In cerebral cortex expressed in small, medium and large pyramidal cells in layers 2, 3 and 5 respectively. Also expressed in striatum, globus pallidus, inferior and superior calliculi, amygdala, magnocellular preoptic nucleus, islands of Calleja and large neurons of olfactory tubercules.

Its subcellular location is the cell membrane. Functionally, does not exhibit measurable stand-alone pH-gated sodium channel activity but may form pH-gated heterotrimeric sodium channels. Its activity could also depend on alternative gating mechanisms. The chain is Acid-sensing ion channel 4 from Rattus norvegicus (Rat).